The sequence spans 367 residues: GTPase Obg (367 aa).

Residues 1–158 (MFIDNVELTV…VQIRLELKLI (158 aa)) form the Obg domain. In terms of domain architecture, OBG-type G spans 159 to 358 (ADVGLVGFPN…LKYALYDLVK (200 aa)). Residues 165-172 (GFPNVGKS), 190-194 (FTTLT), 212-215 (DIPG), 280-283 (TKID), and 339-341 (SAV) contribute to the GTP site. 2 residues coordinate Mg(2+): serine 172 and threonine 192.

The protein belongs to the TRAFAC class OBG-HflX-like GTPase superfamily. OBG GTPase family. As to quaternary structure, monomer. The cofactor is Mg(2+).

It is found in the cytoplasm. An essential GTPase which binds GTP, GDP and possibly (p)ppGpp with moderate affinity, with high nucleotide exchange rates and a fairly low GTP hydrolysis rate. Plays a role in control of the cell cycle, stress response, ribosome biogenesis and in those bacteria that undergo differentiation, in morphogenesis control. The chain is GTPase Obg from Nitratiruptor sp. (strain SB155-2).